The chain runs to 123 residues: uncharacterized protein (123 aa).

This is an uncharacterized protein from Methanocaldococcus jannaschii (strain ATCC 43067 / DSM 2661 / JAL-1 / JCM 10045 / NBRC 100440) (Methanococcus jannaschii).